The following is a 340-amino-acid chain: Immunoglobulin-binding protein 1 family member C (340 aa).

2 disordered regions span residues 223-243 (KDSS…PPMK) and 292-340 (PEEF…QNMG). Over residues 303 to 314 (EDQEKEEEDDEQ) the composition is skewed to acidic residues. Over residues 318–330 (RAREWDDWKDTHP) the composition is skewed to basic and acidic residues.

Belongs to the IGBP1/TAP42 family.

The sequence is that of Immunoglobulin-binding protein 1 family member C from Homo sapiens (Human).